A 589-amino-acid polypeptide reads, in one-letter code: ATP-dependent lipid A-core flippase (589 aa).

Transmembrane regions (helical) follow at residues Trp-23–Phe-43, Leu-60–Ala-80, Val-153–Ile-173, Val-249–Ala-269, and Pro-272–Leu-292. Residues Leu-27 to Lys-307 form the ABC transmembrane type-1 domain. Residues Ile-339 to Met-575 form the ABC transporter domain. Gly-373 to Ser-380 contacts ATP.

The protein belongs to the ABC transporter superfamily. Lipid exporter (TC 3.A.1.106) family. In terms of assembly, homodimer.

The protein resides in the cell inner membrane. It carries out the reaction ATP + H2O + lipid A-core oligosaccharideSide 1 = ADP + phosphate + lipid A-core oligosaccharideSide 2.. In terms of biological role, involved in lipopolysaccharide (LPS) biosynthesis. Translocates lipid A-core from the inner to the outer leaflet of the inner membrane. Transmembrane domains (TMD) form a pore in the inner membrane and the ATP-binding domain (NBD) is responsible for energy generation. The protein is ATP-dependent lipid A-core flippase of Coxiella burnetii (strain RSA 493 / Nine Mile phase I).